The chain runs to 214 residues: RNA pyrophosphohydrolase (214 aa).

In terms of domain architecture, Nudix hydrolase spans glycine 6 to threonine 149. A Nudix box motif is present at residues glycine 38–glycine 59.

Belongs to the Nudix hydrolase family. RppH subfamily. Requires a divalent metal cation as cofactor.

Accelerates the degradation of transcripts by removing pyrophosphate from the 5'-end of triphosphorylated RNA, leading to a more labile monophosphorylated state that can stimulate subsequent ribonuclease cleavage. The sequence is that of RNA pyrophosphohydrolase from Burkholderia cenocepacia (strain ATCC BAA-245 / DSM 16553 / LMG 16656 / NCTC 13227 / J2315 / CF5610) (Burkholderia cepacia (strain J2315)).